The primary structure comprises 298 residues: tRNA dimethylallyltransferase (298 aa).

Position 16-23 (G16–S23) interacts with ATP. Substrate is bound at residue T18–S23. Interaction with substrate tRNA stretches follow at residues D41–Q44 and Q165–R169.

The protein belongs to the IPP transferase family. Monomer. Requires Mg(2+) as cofactor.

It carries out the reaction adenosine(37) in tRNA + dimethylallyl diphosphate = N(6)-dimethylallyladenosine(37) in tRNA + diphosphate. Catalyzes the transfer of a dimethylallyl group onto the adenine at position 37 in tRNAs that read codons beginning with uridine, leading to the formation of N6-(dimethylallyl)adenosine (i(6)A). The chain is tRNA dimethylallyltransferase from Rhizobium radiobacter (Agrobacterium tumefaciens).